The primary structure comprises 708 residues: Polyribonucleotide nucleotidyltransferase (708 aa).

Asp487 and Asp493 together coordinate Mg(2+). In terms of domain architecture, KH spans 554-613; it reads PRIHTMKISADKIKDVIGKGGAVIRALTEETGTTIEIEDDGTIKIAATEGAAAKEAIRRI. In terms of domain architecture, S1 motif spans 623–691; that stretch reads GVIYTGKVAR…RQGRVRLSMK (69 aa).

Belongs to the polyribonucleotide nucleotidyltransferase family. In terms of assembly, component of the RNA degradosome, which is a multiprotein complex involved in RNA processing and mRNA degradation. Mg(2+) serves as cofactor.

It is found in the cytoplasm. It catalyses the reaction RNA(n+1) + phosphate = RNA(n) + a ribonucleoside 5'-diphosphate. Its function is as follows. Involved in mRNA degradation. Catalyzes the phosphorolysis of single-stranded polyribonucleotides processively in the 3'- to 5'-direction. The protein is Polyribonucleotide nucleotidyltransferase of Vibrio vulnificus (strain CMCP6).